Reading from the N-terminus, the 377-residue chain is Virion membrane protein OPG143 (377 aa).

The N-myristoyl glycine; by host moiety is linked to residue Gly2. Residues 2 to 342 (GAAVTLNRIK…VKDKIKLPTW (341 aa)) are Virion surface-facing. Residues 343-363 (LGAAITLVVISVIFYFISIYS) traverse the membrane as a helical; Signal-anchor for type II membrane protein segment. Residues 364 to 377 (RPKIKTNDINVRRR) lie on the Intravirion side of the membrane.

The protein belongs to the orthopoxvirus OPG143 family. Part of a stable entry-fusion complex (EFC) which is at least composed of proteins OPG143, OPG147, OPG155, OPG086, OPG094, OPG107, OPG104, and OPG099. Formation of the viral membrane is necessary for the assembly of the complex. Interacts with OPG094. Interacts with OPG153. Most cysteines are linked by disulfide bonds. They are created by the viral disulfide bond formation pathway, a poxvirus-specific redox pathway that operates on the cytoplasmic side of the MV membranes.

The protein resides in the virion membrane. Envelope protein part of the entry-fusion complex responsible for the virus membrane fusion with host cell membrane during virus entry. Also plays a role in cell-cell fusion (syncytium formation). The chain is Virion membrane protein OPG143 (OPG143) from Vaccinia virus (strain Western Reserve) (VACV).